A 277-amino-acid chain; its full sequence is Phosphatidylglycerol--prolipoprotein diacylglyceryl transferase (277 aa).

The next 3 membrane-spanning stretches (helical) occupy residues 16 to 36 (FFQI…FYFL), 62 to 82 (LLFF…VLFY), and 101 to 121 (GMAF…FAHL). Arg145 contacts a 1,2-diacyl-sn-glycero-3-phospho-(1'-sn-glycerol). 2 helical membrane-spanning segments follow: residues 214–234 (PIWG…RFIA) and 243–263 (FLGL…PMIV).

This sequence belongs to the Lgt family.

It is found in the cell inner membrane. The enzyme catalyses L-cysteinyl-[prolipoprotein] + a 1,2-diacyl-sn-glycero-3-phospho-(1'-sn-glycerol) = an S-1,2-diacyl-sn-glyceryl-L-cysteinyl-[prolipoprotein] + sn-glycerol 1-phosphate + H(+). It functions in the pathway protein modification; lipoprotein biosynthesis (diacylglyceryl transfer). Catalyzes the transfer of the diacylglyceryl group from phosphatidylglycerol to the sulfhydryl group of the N-terminal cysteine of a prolipoprotein, the first step in the formation of mature lipoproteins. In Leptothrix cholodnii (strain ATCC 51168 / LMG 8142 / SP-6) (Leptothrix discophora (strain SP-6)), this protein is Phosphatidylglycerol--prolipoprotein diacylglyceryl transferase.